A 56-amino-acid polypeptide reads, in one-letter code: uncharacterized protein (56 aa).

This is an uncharacterized protein from Dictyostelium discoideum (Social amoeba).